Consider the following 360-residue polypeptide: Mitogen-activated protein kinase 14 (360 aa).

At serine 2 the chain carries N-acetylserine. The residue at position 2 (serine 2) is a Phosphoserine. At threonine 16 the chain carries Phosphothreonine. In terms of domain architecture, Protein kinase spans tyrosine 24–phenylalanine 308. ATP contacts are provided by residues valine 30–valine 38 and lysine 53. Lysine 53 is modified (N6-acetyllysine). Aspartate 150 acts as the Proton acceptor in catalysis. N6-acetyllysine is present on lysine 152. The residue at position 180 (threonine 180) is a Phosphothreonine; by MAP2K3, MAP2K4, MAP2K6 and autocatalysis. The TXY signature appears at threonine 180–tyrosine 182. Tyrosine 182 carries the post-translational modification Phosphotyrosine; by MAP2K3, MAP2K4, MAP2K6 and autocatalysis. Phosphothreonine is present on threonine 263. Tyrosine 323 is subject to Phosphotyrosine; by ZAP70.

This sequence belongs to the protein kinase superfamily. CMGC Ser/Thr protein kinase family. MAP kinase subfamily. As to quaternary structure, component of a signaling complex containing at least AKAP13, PKN1, MAPK14, ZAK and MAP2K3. Within this complex, AKAP13 interacts directly with PKN1, which in turn recruits MAPK14, MAP2K3 and ZAK. Binds to a kinase interaction motif within the protein tyrosine phosphatase, PTPRR. This interaction retains MAPK14 in the cytoplasm and prevents nuclear accumulation. Interacts with SPAG9 and GADD45A. Interacts with CDC25B, CDC25C, DUSP1, DUSP10, DUSP16, NP60, SUPT20H and TAB1. Interacts with casein kinase II subunits CSNK2A1 and CSNK2B. Interacts with PPM1D. Interacts with CDK5RAP3; recruits PPM1D to MAPK14 and may regulate its dephosphorylation. Interacts with DUSP2; this interaction does not lead to catalytic activation of DUSP2 and dephosphrylation of MAPK14. It depends on Mg(2+) as a cofactor. Post-translationally, dually phosphorylated on Thr-180 and Tyr-182 by the MAP2Ks MAP2K3/MKK3, MAP2K4/MKK4 and MAP2K6/MKK6 in response to inflammatory citokines, environmental stress or growth factors, which activates the enzyme. Dual phosphorylation can also be mediated by TAB1-mediated autophosphorylation. TCR engagement in T-cells also leads to Tyr-323 phosphorylation by ZAP70. Dephosphorylated and inactivated by DUPS1, DUSP10 and DUSP16. PPM1D also mediates dephosphorylation and inactivation of MAPK14. Acetylated at Lys-53 and Lys-152 by KAT2B and EP300. Acetylation at Lys-53 increases the affinity for ATP and enhances kinase activity. Lys-53 and Lys-152 are deacetylated by HDAC3. In terms of processing, ubiquitinated. Ubiquitination leads to degradation by the proteasome pathway.

Its subcellular location is the cytoplasm. It localises to the nucleus. The catalysed reaction is L-seryl-[protein] + ATP = O-phospho-L-seryl-[protein] + ADP + H(+). It carries out the reaction L-threonyl-[protein] + ATP = O-phospho-L-threonyl-[protein] + ADP + H(+). Activated by cell stresses such as DNA damage, heat shock, osmotic shock, anisomycin and sodium arsenite, as well as pro-inflammatory stimuli such as bacterial lipopolysaccharide (LPS) and interleukin-1. Activation occurs through dual phosphorylation of Thr-180 and Tyr-182 by either of two dual specificity kinases, MAP2K3/MKK3 or MAP2K6/MKK6, and potentially also MAP2K4/MKK4, as well as by TAB1-mediated autophosphorylation. MAPK14 phosphorylated on both Thr-180 and Tyr-182 is 10-20-fold more active than MAPK14 phosphorylated only on Thr-180, whereas MAPK14 phosphorylated on Tyr-182 alone is inactive. whereas Thr-180 is necessary for catalysis, Tyr-182 may be required for auto-activation and substrate recognition. Phosphorylated at Tyr-323 by ZAP70 in an alternative activation pathway in response to TCR signaling in T-cells. This alternative pathway is inhibited by GADD45A. Inhibited by dual specificity phosphatases, such as DUSP1, DUSP10, and DUSP16. Specifically inhibited by the binding of pyridinyl-imidazole compounds, which are cytokine-suppressive anti-inflammatory drugs (CSAID). SB203580 is an inhibitor of MAPK14. Serine/threonine kinase which acts as an essential component of the MAP kinase signal transduction pathway. MAPK14 is one of the four p38 MAPKs which play an important role in the cascades of cellular responses evoked by extracellular stimuli such as pro-inflammatory cytokines or physical stress leading to direct activation of transcription factors. Accordingly, p38 MAPKs phosphorylate a broad range of proteins and it has been estimated that they may have approximately 200 to 300 substrates each. Some of the targets are downstream kinases which are activated through phosphorylation and further phosphorylate additional targets. RPS6KA5/MSK1 and RPS6KA4/MSK2 can directly phosphorylate and activate transcription factors such as CREB1, ATF1, the NF-kappa-B isoform RELA/NFKB3, STAT1 and STAT3, but can also phosphorylate histone H3 and the nucleosomal protein HMGN1. RPS6KA5/MSK1 and RPS6KA4/MSK2 play important roles in the rapid induction of immediate-early genes in response to stress or mitogenic stimuli, either by inducing chromatin remodeling or by recruiting the transcription machinery. On the other hand, two other kinase targets, MAPKAPK2/MK2 and MAPKAPK3/MK3, participate in the control of gene expression mostly at the post-transcriptional level, by phosphorylating ZFP36 (tristetraprolin) and ELAVL1, and by regulating EEF2K, which is important for the elongation of mRNA during translation. MKNK1/MNK1 and MKNK2/MNK2, two other kinases activated by p38 MAPKs, regulate protein synthesis by phosphorylating the initiation factor EIF4E2. MAPK14 also interacts with casein kinase II, leading to its activation through autophosphorylation and further phosphorylation of TP53/p53. In the cytoplasm, the p38 MAPK pathway is an important regulator of protein turnover. For example, CFLAR is an inhibitor of TNF-induced apoptosis whose proteasome-mediated degradation is regulated by p38 MAPK phosphorylation. In a similar way, MAPK14 phosphorylates the ubiquitin ligase SIAH2, regulating its activity towards EGLN3. MAPK14 may also inhibit the lysosomal degradation pathway of autophagy by interfering with the intracellular trafficking of the transmembrane protein ATG9. Another function of MAPK14 is to regulate the endocytosis of membrane receptors by different mechanisms that impinge on the small GTPase RAB5A. In addition, clathrin-mediated EGFR internalization induced by inflammatory cytokines and UV irradiation depends on MAPK14-mediated phosphorylation of EGFR itself as well as of RAB5A effectors. Ectodomain shedding of transmembrane proteins is regulated by p38 MAPKs as well. In response to inflammatory stimuli, p38 MAPKs phosphorylate the membrane-associated metalloprotease ADAM17. Such phosphorylation is required for ADAM17-mediated ectodomain shedding of TGF-alpha family ligands, which results in the activation of EGFR signaling and cell proliferation. Another p38 MAPK substrate is FGFR1. FGFR1 can be translocated from the extracellular space into the cytosol and nucleus of target cells, and regulates processes such as rRNA synthesis and cell growth. FGFR1 translocation requires p38 MAPK activation. In the nucleus, many transcription factors are phosphorylated and activated by p38 MAPKs in response to different stimuli. Classical examples include ATF1, ATF2, ATF6, ELK1, PTPRH, DDIT3, TP53/p53 and MEF2C and MEF2A. The p38 MAPKs are emerging as important modulators of gene expression by regulating chromatin modifiers and remodelers. The promoters of several genes involved in the inflammatory response, such as IL6, IL8 and IL12B, display a p38 MAPK-dependent enrichment of histone H3 phosphorylation on 'Ser-10' (H3S10ph) in LPS-stimulated myeloid cells. This phosphorylation enhances the accessibility of the cryptic NF-kappa-B-binding sites marking promoters for increased NF-kappa-B recruitment. Phosphorylates CDC25B and CDC25C which is required for binding to 14-3-3 proteins and leads to initiation of a G2 delay after ultraviolet radiation. Phosphorylates TIAR following DNA damage, releasing TIAR from GADD45A mRNA and preventing mRNA degradation. The p38 MAPKs may also have kinase-independent roles, which are thought to be due to the binding to targets in the absence of phosphorylation. Protein O-Glc-N-acylation catalyzed by the OGT is regulated by MAPK14, and, although OGT does not seem to be phosphorylated by MAPK14, their interaction increases upon MAPK14 activation induced by glucose deprivation. This interaction may regulate OGT activity by recruiting it to specific targets such as neurofilament H, stimulating its O-Glc-N-acylation. Required in mid-fetal development for the growth of embryo-derived blood vessels in the labyrinth layer of the placenta. Also plays an essential role in developmental and stress-induced erythropoiesis, through regulation of EPO gene expression. Phosphorylates S100A9 at 'Thr-113'. This Canis lupus familiaris (Dog) protein is Mitogen-activated protein kinase 14.